The sequence spans 411 residues: Translation initiation factor 2 subunit gamma (411 aa).

Residues 9-203 (QAEVNIGMVG…AIEDFIPTPK (195 aa)) form the tr-type G domain. The segment at 18 to 25 (GHVDHGKT) is G1. 4 residues coordinate Mg(2+): aspartate 21, threonine 25, glycine 46, and threonine 48. 21 to 26 (DHGKTT) contacts GTP. The G2 stretch occupies residues 46–50 (GITIK). Positions 61, 64, 73, and 76 each coordinate Zn(2+). Residues 90 to 93 (DAPG) are G3. GTP is bound by residues 146-149 (NKIE) and 181-183 (SAL). Residues 146–149 (NKIE) are G4. The interval 181–183 (SAL) is G5.

Belongs to the TRAFAC class translation factor GTPase superfamily. Classic translation factor GTPase family. EIF2G subfamily. As to quaternary structure, heterotrimer composed of an alpha, a beta and a gamma chain. Requires Mg(2+) as cofactor.

The catalysed reaction is GTP + H2O = GDP + phosphate + H(+). Its function is as follows. eIF-2 functions in the early steps of protein synthesis by forming a ternary complex with GTP and initiator tRNA. The polypeptide is Translation initiation factor 2 subunit gamma (Pyrococcus abyssi (strain GE5 / Orsay)).